A 137-amino-acid polypeptide reads, in one-letter code: Large ribosomal subunit protein uL16 (137 aa).

Belongs to the universal ribosomal protein uL16 family. As to quaternary structure, part of the 50S ribosomal subunit.

Its function is as follows. Binds 23S rRNA and is also seen to make contacts with the A and possibly P site tRNAs. This chain is Large ribosomal subunit protein uL16, found in Marinomonas sp. (strain MWYL1).